Consider the following 121-residue polypeptide: Ribosome-binding factor A (121 aa).

Belongs to the RbfA family. As to quaternary structure, monomer. Binds 30S ribosomal subunits, but not 50S ribosomal subunits or 70S ribosomes.

Its subcellular location is the cytoplasm. Functionally, one of several proteins that assist in the late maturation steps of the functional core of the 30S ribosomal subunit. Associates with free 30S ribosomal subunits (but not with 30S subunits that are part of 70S ribosomes or polysomes). Required for efficient processing of 16S rRNA. May interact with the 5'-terminal helix region of 16S rRNA. The protein is Ribosome-binding factor A of Hydrogenovibrio crunogenus (strain DSM 25203 / XCL-2) (Thiomicrospira crunogena).